Reading from the N-terminus, the 163-residue chain is Nucleotide-binding protein BA_1166 (163 aa).

It belongs to the YajQ family.

Nucleotide-binding protein. This Bacillus anthracis protein is Nucleotide-binding protein BA_1166.